A 399-amino-acid polypeptide reads, in one-letter code: Actin-related protein 2 (399 aa).

Residues 165–167 (GDG), 219–223 (RIMKE), and 310–315 (GGSTMY) each bind ATP.

This sequence belongs to the actin family. ARP2 subfamily. In terms of assembly, component of the Arp2/3 complex.

It is found in the cytoplasm. The protein localises to the cytoskeleton. Functions as ATP-binding component of the Arp2/3 complex which is involved in regulation of actin polymerization and together with an activating nucleation-promoting factor (NPF) mediates the formation of branched actin networks. Seems to contact the pointed end of the daughter actin filament. The chain is Actin-related protein 2 (Arp2) from Drosophila melanogaster (Fruit fly).